Consider the following 198-residue polypeptide: Interferon gamma (198 aa).

Positions 1–23 (MMVSTARAVVCLSLCLCVCQVRG) are cleaved as a signal peptide. Asn31, Asn42, and Asn174 each carry an N-linked (GlcNAc...) asparagine glycan. The disordered stretch occupies residues 173-198 (SNNTKMQRRRRRRRRQARKVKTPTRA). Residues 178–198 (MQRRRRRRRRQARKVKTPTRA) are compositionally biased toward basic residues.

The protein belongs to the type II (or gamma) interferon family. Homodimer.

It is found in the secreted. In terms of biological role, cytokine which binds to interferon gamma receptor 1 (ifngr1). Also binds with lower affinity to interferon gamma receptor 1-like (ifngr1l). Has activating effects on macrophages and neutrophils. The chain is Interferon gamma from Paralichthys olivaceus (Bastard halibut).